The sequence spans 727 residues: Phenylalanine ammonia-lyase str11 (727 aa).

The Proton donor/acceptor role is filled by Tyr105. The 5-imidazolinone (Ala-Gly) cross-link spans 210 to 212; the sequence is ASG. Ser211 carries the 2,3-didehydroalanine (Ser) modification. Residues Asn271, Gln361, Arg367, Asn397, Lys468, Glu496, and Asn499 each coordinate (E)-cinnamate.

It belongs to the PAL/histidase family. In terms of processing, contains an active site 4-methylidene-imidazol-5-one (MIO), which is formed autocatalytically by cyclization and dehydration of residues Ala-Ser-Gly.

The catalysed reaction is L-phenylalanine = (E)-cinnamate + NH4(+). Its pathway is mycotoxin biosynthesis. Its function is as follows. Phenylalanine ammonia-lyase; part of the gene cluster that mediates the biosynthesis of strobilurin A, an antifungal polyketide that contains a key beta-methoxyacrylate toxophore that targets the complex III of the mitochondrial electron transport chain. Strobilurin biosynthesis begins with construction of benzoyl CoA by step-wise elimination of ammonia from phenylalanine by the phenylalanine ammonia-lyase str11, oxygenation by str8 and retro-Claisen reaction to form benzoic acid, which is activated to its CoA thiolester benzoyl CoA by the dedicated CoA ligase str10. Benzoyl CoA forms the starter unit for the highly reducing polyketide synthase stpks1 that produces the polyketide prestrobilutin A. The FAD-dependent oxygenase str9 then catalyzes the key oxidative rearrangement responsible for the creation of the beta-methoxyacrylate toxophore. Str9 performs epoxidation of the 2,3 olefin of prestrobilutin A, followed by Meinwald rearrangement to furnish the aldehyde intermediate. Rapid enolization of the aldehyde intermediate would give the beta-methoxyacrylate skeleton and methylations catalyzed by str2 and str3 complete the synthesis and lead to the production of strobilurin A. The short-chain dehydrogenase stl2 and the dehydrogenase str4 play a role in the shunt pathway leading to the production of bolineol. The cluster encodes no obvious halogenase gene that could be involved in production of strobilurin B, nor any obvious dimethylallyl-transferase that could be involved in the production of strobilurin G. It is possible that unknown proteins encoded in, or near, the cluster (such as str1 or stl1) may form new classes of halogenases or dimethylally-transferases, or that the responsible genes are located elsewhere on the genome. Similarly, proteins encoded by str5/str6 hydrolases appear to have no chemical role in the biosynthesis of strobilurin A. Finally, no obvious self-resistance gene is found within the cluster. In Strobilurus tenacellus, this protein is Phenylalanine ammonia-lyase str11.